The sequence spans 289 residues: CRISPR-associated endoribonuclease Cas6 2 (289 aa).

This sequence belongs to the CRISPR-associated endoribonuclease Cas6 family. Possibly part of the aCascade ribonucleoprotein complex. Mg(2+) is required as a cofactor.

CRISPR (clustered regularly interspaced short palindromic repeat) is an adaptive immune system that provides protection against mobile genetic elements (viruses, transposable elements and conjugative plasmids). CRISPR clusters contain sequences complementary to antecedent mobile elements and target invading nucleic acids. CRISPR clusters are transcribed and processed into CRISPR RNA (crRNA). Functions as a ssRNA-specific endoribonuclease, generating an 8 base-long tag known as the 5' handle. In Saccharolobus solfataricus (strain ATCC 35092 / DSM 1617 / JCM 11322 / P2) (Sulfolobus solfataricus), this protein is CRISPR-associated endoribonuclease Cas6 2 (cas6b).